A 152-amino-acid polypeptide reads, in one-letter code: Melatonin receptor type 1B (152 aa).

Topologically, residues 1-12 (HSFVYEKLFSLW) are cytoplasmic. Residues 13–33 (NTILYVCLIWTLTVVATVPNF) traverse the membrane as a helical segment. Over 34 to 57 (FVGSLEYDPRIYSCTFVQTVSSSY) the chain is Extracellular. A helical transmembrane segment spans residues 58-78 (TITVVVIHFILPITVVTFCYL). The Cytoplasmic portion of the chain corresponds to 79–110 (RIWILVIQVRRKVKSEFKPRMKQSDFRNFLTM). A helical membrane pass occupies residues 111–131 (FVVFVIFAFCWAPLNFIGLAV). Residues 132–144 (SINPTEVAPKIPE) are Extracellular-facing. A helical transmembrane segment spans residues 145–152 (WLFVVSYF).

The protein belongs to the G-protein coupled receptor 1 family.

The protein localises to the cell membrane. Functionally, high affinity receptor for melatonin. The activity of this receptor is mediated by pertussis toxin sensitive G proteins that inhibits adenylate cyclase activity. This chain is Melatonin receptor type 1B (mtnr1b), found in Xenopus laevis (African clawed frog).